We begin with the raw amino-acid sequence, 269 residues long: uncharacterized protein (269 aa).

103–110 contributes to the ATP binding site; that stretch reads GIFTMGKS.

This is an uncharacterized protein from Mycoplasma pneumoniae (strain ATCC 29342 / M129 / Subtype 1) (Mycoplasmoides pneumoniae).